Here is a 172-residue protein sequence, read N- to C-terminus: Protein GrpE (172 aa).

The protein belongs to the GrpE family. Homodimer.

Its subcellular location is the cytoplasm. Participates actively in the response to hyperosmotic and heat shock by preventing the aggregation of stress-denatured proteins, in association with DnaK and GrpE. It is the nucleotide exchange factor for DnaK and may function as a thermosensor. Unfolded proteins bind initially to DnaJ; upon interaction with the DnaJ-bound protein, DnaK hydrolyzes its bound ATP, resulting in the formation of a stable complex. GrpE releases ADP from DnaK; ATP binding to DnaK triggers the release of the substrate protein, thus completing the reaction cycle. Several rounds of ATP-dependent interactions between DnaJ, DnaK and GrpE are required for fully efficient folding. This is Protein GrpE from Thermotoga petrophila (strain ATCC BAA-488 / DSM 13995 / JCM 10881 / RKU-1).